The following is a 620-amino-acid chain: Translocator protein BipB (620 aa).

The interval 58-95 (QCDAQPAAHDARLDDRPALRAPQERDAPPLGASDTGSR) is disordered. Over residues 66–84 (HDARLDDRPALRAPQERDA) the composition is skewed to basic and acidic residues. Positions 309-339 (EMQAKREAELQKKSDEYQAQVKKAEEMQKTM) form a coiled coil. A run of 3 helical transmembrane segments spans residues 355–375 (FAAA…GLAL), 401–421 (AILK…LVAC), and 430–450 (LAGA…AAFV).

The protein belongs to the SctE/SipB/YopB family.

It is found in the secreted. The protein resides in the host membrane. In terms of biological role, plays a role in the bacterium-induced formation of multinucleated giant cell (MNGC), which is formed after host cell fusion, as well as in the intercellular spreading of bacteria and in the induction of apoptosis in macrophages. May act in concert with other effector proteins to induce fusion of host cell membranes. This chain is Translocator protein BipB (bipB), found in Burkholderia mallei (strain NCTC 10247).